Consider the following 314-residue polypeptide: Oxaloacetate tautomerase FAHD2B, mitochondrial (314 aa).

The transit peptide at 1-84 (MLGSSGRRLL…ATLSVVRRAL (84 aa)) directs the protein to the mitochondrion. Mg(2+) contacts are provided by Glu159, Glu161, and Asp190. Lys203 is subject to N6-acetyllysine; alternate. Lys203 is subject to N6-succinyllysine; alternate. Lys234 is modified (N6-acetyllysine).

It belongs to the FAH family. Mg(2+) serves as cofactor. The cofactor is Mn(2+).

The protein resides in the mitochondrion. The enzyme catalyses oxaloacetate = enol-oxaloacetate. In terms of biological role, tautomerase that converts enol-oxaloacetate, a strong inhibitor of succinate dehydrogenase, to the physiological keto form of oxaloacetate. It is thereby required to maximize aerobic respiration efficiency by preventing succinate dehydrogenase inhibition. The polypeptide is Oxaloacetate tautomerase FAHD2B, mitochondrial (Bos taurus (Bovine)).